A 74-amino-acid chain; its full sequence is Putative defensin-like protein 12 (74 aa).

A signal peptide spans 1–26 (MAKPCAAFLVFLCLSMLILSIPDISC). Disulfide bonds link Cys26/Cys50, Cys33/Cys59, and Cys39/Cys61.

Belongs to the DEFL family.

It localises to the secreted. The chain is Putative defensin-like protein 12 from Arabidopsis thaliana (Mouse-ear cress).